Reading from the N-terminus, the 186-residue chain is Tumor necrosis factor alpha-induced protein 8-like protein 1 (186 aa).

Belongs to the TNFAIP8 family. As to quaternary structure, interacts with FBXW5; TNFAIP8L1 competes with TSC2 to bind FBXW5 increasing TSC2 stability by preventing its ubiquitination.

It localises to the cytoplasm. Its function is as follows. Acts as a negative regulator of mTOR activity. This is Tumor necrosis factor alpha-induced protein 8-like protein 1 (TNFAIP8L1) from Bos taurus (Bovine).